A 129-amino-acid polypeptide reads, in one-letter code: Follitropin subunit beta (129 aa).

The signal sequence occupies residues 1–18 (MKSVQFCFLFCCWRVICC). 6 disulfides stabilise this stretch: Cys-21–Cys-69, Cys-35–Cys-84, Cys-38–Cys-122, Cys-46–Cys-100, Cys-50–Cys-102, and Cys-105–Cys-112. Residues Asn-25 and Asn-42 are each glycosylated (N-linked (GlcNAc...) asparagine).

It belongs to the glycoprotein hormones subunit beta family. As to quaternary structure, heterodimer. The active follitropin is a heterodimer composed of an alpha chain/CGA shared with other hormones and a unique beta chain/FSHB shown here.

The protein localises to the secreted. Together with the alpha chain CGA constitutes follitropin, the follicle-stimulating hormone, and provides its biological specificity to the hormone heterodimer. Binds FSHR, a G protein-coupled receptor, on target cells to activate downstream signaling pathways. Follitropin is involved in follicle development and spermatogenesis in reproductive organs. This Panthera tigris altaica (Siberian tiger) protein is Follitropin subunit beta (FSHB).